Consider the following 275-residue polypeptide: Lectin (275 aa).

The signal sequence occupies residues 1–30 (MASLQTQMISFYLIFLSILLTTIFFFKVNS). The D-glucose site is built by D111 and G129. Mn(2+) contacts are provided by E149 and D151. 4 residues coordinate Ca(2+): D151, F153, N155, and D159. Mn(2+) is bound by residues D159 and H166. Residues 211 to 217 (NSLEEEN) constitute a propeptide that is removed on maturation. Residues G246 and A247 each coordinate D-glucose. Positions 270-275 (KQAADA) are excised as a propeptide.

It belongs to the leguminous lectin family. Heterotetramer of two alpha and two beta chains. In terms of processing, the mature form consists of two chains, alpha and beta, produced by cleavage of the immature protein. These remain cleaved, yet fold together to form one subunit.

In terms of biological role, D-mannose specific lectin. This is Lectin from Lens culinaris (Lentil).